A 146-amino-acid polypeptide reads, in one-letter code: Hemoglobin subunit beta (146 aa).

Positions 2–146 (QWTAEEKQLI…VAHALARKYH (145 aa)) constitute a Globin domain. 2 residues coordinate heme b: histidine 63 and histidine 92.

Belongs to the globin family. As to quaternary structure, heterotetramer of two alpha chains and two beta chains. In terms of tissue distribution, red blood cells.

In terms of biological role, involved in oxygen transport from the lung to the various peripheral tissues. The sequence is that of Hemoglobin subunit beta (HBB) from Sturnus vulgaris (Starling).